Reading from the N-terminus, the 45-residue chain is Iota-conotoxin-like R11.10 (45 aa).

Disulfide bonds link C5–C19, C12–C22, C18–C27, and C21–C36. The residue at position 43 (L43) is a D-leucine. Residue R45 is a propeptide, removed by a carboxypeptidase.

This sequence belongs to the conotoxin I1 superfamily. Expressed by the venom duct.

It is found in the secreted. In terms of biological role, iota-conotoxins bind to voltage-gated sodium channels (Nav) and act as agonists by shifting the voltage-dependence of activation to more hyperpolarized levels. Produces general excitatory symptoms. The polypeptide is Iota-conotoxin-like R11.10 (Conus radiatus (Rayed cone)).